Reading from the N-terminus, the 349-residue chain is Protein-arginine kinase (349 aa).

Residues 24–252 (IVLSSRIRLA…SQIIEQERQA (229 aa)) enclose the Phosphagen kinase C-terminal domain. Residues 27 to 31 (SSRIR), histidine 89, arginine 123, 174 to 178 (RASVM), and 205 to 210 (RGIYGE) contribute to the ATP site. The RDXXRA motif of the pArg binding pocket involved in allosteric regulation motif lies at 335-340 (RDIKRA).

Belongs to the ATP:guanido phosphotransferase family.

The enzyme catalyses L-arginyl-[protein] + ATP = N(omega)-phospho-L-arginyl-[protein] + ADP + H(+). With respect to regulation, appears to be allosterically activated by the binding of pArg-containing polypeptides to the pArg-binding pocket localized in the C-terminal domain of McsB. Its function is as follows. Catalyzes the specific phosphorylation of arginine residues in proteins. The chain is Protein-arginine kinase from Halothermothrix orenii (strain H 168 / OCM 544 / DSM 9562).